A 339-amino-acid chain; its full sequence is DNA-directed RNA polymerase subunit alpha (339 aa).

The tract at residues 1 to 233 (MVREEVAGST…DLFLPFLHAE (233 aa)) is alpha N-terminal domain (alpha-NTD). Positions 264–339 (KKGIPLNCIF…IDLLKNKLSF (76 aa)) are alpha C-terminal domain (alpha-CTD).

This sequence belongs to the RNA polymerase alpha chain family. As to quaternary structure, in plastids the minimal PEP RNA polymerase catalytic core is composed of four subunits: alpha, beta, beta', and beta''. When a (nuclear-encoded) sigma factor is associated with the core the holoenzyme is formed, which can initiate transcription.

It is found in the plastid. The protein localises to the chloroplast. It carries out the reaction RNA(n) + a ribonucleoside 5'-triphosphate = RNA(n+1) + diphosphate. Functionally, DNA-dependent RNA polymerase catalyzes the transcription of DNA into RNA using the four ribonucleoside triphosphates as substrates. The polypeptide is DNA-directed RNA polymerase subunit alpha (Aegilops uniaristata (Goatgrass)).